Consider the following 470-residue polypeptide: Uronate isomerase (470 aa).

Belongs to the metallo-dependent hydrolases superfamily. Uronate isomerase family.

The enzyme catalyses D-glucuronate = D-fructuronate. It carries out the reaction aldehydo-D-galacturonate = keto-D-tagaturonate. Its pathway is carbohydrate metabolism; pentose and glucuronate interconversion. This Salmonella arizonae (strain ATCC BAA-731 / CDC346-86 / RSK2980) protein is Uronate isomerase.